The sequence spans 455 residues: Bifunctional protein GlmU (455 aa).

The pyrophosphorylase stretch occupies residues 1-227 (MGLSVIILAA…CEEVQGVNDR (227 aa)). UDP-N-acetyl-alpha-D-glucosamine-binding positions include 8-11 (LAAG), Lys22, Gln73, 78-79 (GT), 100-102 (YGD), Gly137, Glu152, Asn167, and Asn225. Asp102 serves as a coordination point for Mg(2+). Asn225 serves as a coordination point for Mg(2+). The segment at 228 to 248 (WELTKLERYYQRLMAKKLSLA) is linker. The interval 249–455 (GVTIIDPERF…KGWHRPTKKE (207 aa)) is N-acetyltransferase. Residues Arg332 and Lys350 each contribute to the UDP-N-acetyl-alpha-D-glucosamine site. The active-site Proton acceptor is the His362. UDP-N-acetyl-alpha-D-glucosamine contacts are provided by Tyr365 and Asn376. Acetyl-CoA contacts are provided by residues Ala379, 385–386 (NY), Ser404, Ala422, and Arg439.

The protein in the N-terminal section; belongs to the N-acetylglucosamine-1-phosphate uridyltransferase family. This sequence in the C-terminal section; belongs to the transferase hexapeptide repeat family. In terms of assembly, homotrimer. It depends on Mg(2+) as a cofactor.

Its subcellular location is the cytoplasm. It carries out the reaction alpha-D-glucosamine 1-phosphate + acetyl-CoA = N-acetyl-alpha-D-glucosamine 1-phosphate + CoA + H(+). The catalysed reaction is N-acetyl-alpha-D-glucosamine 1-phosphate + UTP + H(+) = UDP-N-acetyl-alpha-D-glucosamine + diphosphate. Its pathway is nucleotide-sugar biosynthesis; UDP-N-acetyl-alpha-D-glucosamine biosynthesis; N-acetyl-alpha-D-glucosamine 1-phosphate from alpha-D-glucosamine 6-phosphate (route II): step 2/2. It participates in nucleotide-sugar biosynthesis; UDP-N-acetyl-alpha-D-glucosamine biosynthesis; UDP-N-acetyl-alpha-D-glucosamine from N-acetyl-alpha-D-glucosamine 1-phosphate: step 1/1. It functions in the pathway bacterial outer membrane biogenesis; LPS lipid A biosynthesis. Functionally, catalyzes the last two sequential reactions in the de novo biosynthetic pathway for UDP-N-acetylglucosamine (UDP-GlcNAc). The C-terminal domain catalyzes the transfer of acetyl group from acetyl coenzyme A to glucosamine-1-phosphate (GlcN-1-P) to produce N-acetylglucosamine-1-phosphate (GlcNAc-1-P), which is converted into UDP-GlcNAc by the transfer of uridine 5-monophosphate (from uridine 5-triphosphate), a reaction catalyzed by the N-terminal domain. The protein is Bifunctional protein GlmU of Coxiella burnetii (strain CbuG_Q212) (Coxiella burnetii (strain Q212)).